Here is a 355-residue protein sequence, read N- to C-terminus: UDP-N-acetylglucosamine--N-acetylmuramyl-(pentapeptide) pyrophosphoryl-undecaprenol N-acetylglucosamine transferase (355 aa).

Residues 15-17, Asn-127, Arg-163, Ser-191, Ile-244, 263-268, and Gln-288 contribute to the UDP-N-acetyl-alpha-D-glucosamine site; these read TGG and ALTVSE.

The protein belongs to the glycosyltransferase 28 family. MurG subfamily.

The protein resides in the cell inner membrane. It catalyses the reaction di-trans,octa-cis-undecaprenyl diphospho-N-acetyl-alpha-D-muramoyl-L-alanyl-D-glutamyl-meso-2,6-diaminopimeloyl-D-alanyl-D-alanine + UDP-N-acetyl-alpha-D-glucosamine = di-trans,octa-cis-undecaprenyl diphospho-[N-acetyl-alpha-D-glucosaminyl-(1-&gt;4)]-N-acetyl-alpha-D-muramoyl-L-alanyl-D-glutamyl-meso-2,6-diaminopimeloyl-D-alanyl-D-alanine + UDP + H(+). The protein operates within cell wall biogenesis; peptidoglycan biosynthesis. In terms of biological role, cell wall formation. Catalyzes the transfer of a GlcNAc subunit on undecaprenyl-pyrophosphoryl-MurNAc-pentapeptide (lipid intermediate I) to form undecaprenyl-pyrophosphoryl-MurNAc-(pentapeptide)GlcNAc (lipid intermediate II). This chain is UDP-N-acetylglucosamine--N-acetylmuramyl-(pentapeptide) pyrophosphoryl-undecaprenol N-acetylglucosamine transferase, found in Salmonella arizonae (strain ATCC BAA-731 / CDC346-86 / RSK2980).